Consider the following 70-residue polypeptide: Cytochrome c oxidase subunit 8B, mitochondrial (70 aa).

The N-terminal 24 residues, 1-24 (MPRLPPILRLLQAPEKYTVIPKAR), are a transit peptide targeting the mitochondrion. The Mitochondrial matrix segment spans residues 25 to 35 (ISSKPAKSPTS). The chain crosses the membrane as a helical span at residues 36–59 (AMDQAVGMSVIIAGFMVPAGWVLS). Residues 60–70 (HLESYKRSSAA) lie on the Mitochondrial intermembrane side of the membrane.

It belongs to the cytochrome c oxidase VIII family. As to quaternary structure, component of the cytochrome c oxidase (complex IV, CIV), a multisubunit enzyme composed of 14 subunits. The complex is composed of a catalytic core of 3 subunits MT-CO1, MT-CO2 and MT-CO3, encoded in the mitochondrial DNA, and 11 supernumerary subunits COX4I, COX5A, COX5B, COX6A, COX6B, COX6C, COX7A, COX7B, COX7C, COX8 and NDUFA4, which are encoded in the nuclear genome. The complex exists as a monomer or a dimer and forms supercomplexes (SCs) in the inner mitochondrial membrane with NADH-ubiquinone oxidoreductase (complex I, CI) and ubiquinol-cytochrome c oxidoreductase (cytochrome b-c1 complex, complex III, CIII), resulting in different assemblies (supercomplex SCI(1)III(2)IV(1) and megacomplex MCI(2)III(2)IV(2)).

The protein localises to the mitochondrion inner membrane. It functions in the pathway energy metabolism; oxidative phosphorylation. Component of the cytochrome c oxidase, the last enzyme in the mitochondrial electron transport chain which drives oxidative phosphorylation. The respiratory chain contains 3 multisubunit complexes succinate dehydrogenase (complex II, CII), ubiquinol-cytochrome c oxidoreductase (cytochrome b-c1 complex, complex III, CIII) and cytochrome c oxidase (complex IV, CIV), that cooperate to transfer electrons derived from NADH and succinate to molecular oxygen, creating an electrochemical gradient over the inner membrane that drives transmembrane transport and the ATP synthase. Cytochrome c oxidase is the component of the respiratory chain that catalyzes the reduction of oxygen to water. Electrons originating from reduced cytochrome c in the intermembrane space (IMS) are transferred via the dinuclear copper A center (CU(A)) of subunit 2 and heme A of subunit 1 to the active site in subunit 1, a binuclear center (BNC) formed by heme A3 and copper B (CU(B)). The BNC reduces molecular oxygen to 2 water molecules using 4 electrons from cytochrome c in the IMS and 4 protons from the mitochondrial matrix. The chain is Cytochrome c oxidase subunit 8B, mitochondrial (Cox8b) from Rattus norvegicus (Rat).